The following is a 151-amino-acid chain: MAQIGIFVGTVYGNALLVAEEAENILKDRGHEVKVFEDATLESWLDYREQTVLVVTSTTGQGQLPDSIVPLYAALREKGGYQPALRYGVIALGDSSYPNFCAGGHLFDALLQEIGAKRLGDVLDVDAVEHPEPEVISCPWVEAWADLVDAQ.

The Flavodoxin-like domain occupies 4-145; the sequence is IGIFVGTVYG…ISCPWVEAWA (142 aa). Residues 10–15 and 99–101 contribute to the FMN site; these read TVYGNA and NFC.

It belongs to the flavodoxin family. MioC subfamily. Monomer. It depends on FMN as a cofactor.

In terms of biological role, probable electron transporter. The protein is Flavodoxin YqcA of Pectobacterium carotovorum subsp. carotovorum (Erwinia carotovora subsp. carotovora).